A 268-amino-acid chain; its full sequence is Tryptophan synthase alpha chain (268 aa).

Active-site proton acceptor residues include Glu-49 and Asp-60.

This sequence belongs to the TrpA family. Tetramer of two alpha and two beta chains.

The catalysed reaction is (1S,2R)-1-C-(indol-3-yl)glycerol 3-phosphate + L-serine = D-glyceraldehyde 3-phosphate + L-tryptophan + H2O. It participates in amino-acid biosynthesis; L-tryptophan biosynthesis; L-tryptophan from chorismate: step 5/5. In terms of biological role, the alpha subunit is responsible for the aldol cleavage of indoleglycerol phosphate to indole and glyceraldehyde 3-phosphate. This Pseudomonas aeruginosa (strain UCBPP-PA14) protein is Tryptophan synthase alpha chain.